Consider the following 484-residue polypeptide: Glycogen synthase (484 aa).

Lys-15 contributes to the ADP-alpha-D-glucose binding site.

It belongs to the glycosyltransferase 1 family. Bacterial/plant glycogen synthase subfamily.

It catalyses the reaction [(1-&gt;4)-alpha-D-glucosyl](n) + ADP-alpha-D-glucose = [(1-&gt;4)-alpha-D-glucosyl](n+1) + ADP + H(+). It functions in the pathway glycan biosynthesis; glycogen biosynthesis. Synthesizes alpha-1,4-glucan chains using ADP-glucose. This is Glycogen synthase from Syntrophotalea carbinolica (strain DSM 2380 / NBRC 103641 / GraBd1) (Pelobacter carbinolicus).